A 376-amino-acid chain; its full sequence is Fructose-1,6-bisphosphate aldolase/phosphatase (376 aa).

The Proton acceptor; for FBP phosphatase activity role is filled by Asp-11. Residues Asp-11, His-18, Asp-49, and Asp-50 each contribute to the Mg(2+) site. His-18 lines the beta-D-fructose 1,6-bisphosphate pocket. His-18 provides a ligand contact to dihydroxyacetone phosphate. Residue Tyr-87 participates in beta-D-fructose 1,6-bisphosphate binding. Gln-91 contributes to the Mg(2+) binding site. 100-101 (GN) contributes to the beta-D-fructose 1,6-bisphosphate binding site. Position 128 (Asp-128) interacts with Mg(2+). Residue Lys-129 participates in beta-D-fructose 1,6-bisphosphate binding. A dihydroxyacetone phosphate-binding site is contributed by Lys-129. Tyr-224 (proton donor/acceptor; for FBP aldolase activity) is an active-site residue. Positions 227, 228, and 229 each coordinate Mg(2+). Lys-227 functions as the Schiff-base intermediate with DHAP; for FBP aldolase activity in the catalytic mechanism. Residues 237-238 (QK), Arg-261, and Tyr-342 each bind beta-D-fructose 1,6-bisphosphate. Dihydroxyacetone phosphate is bound at residue Arg-261. The disordered stretch occupies residues 357–376 (MVPLKDSGPAGTGRAYEDPD).

This sequence belongs to the FBP aldolase/phosphatase family. As to quaternary structure, homooctamer; dimer of tetramers. The cofactor is Mg(2+).

The catalysed reaction is beta-D-fructose 1,6-bisphosphate + H2O = beta-D-fructose 6-phosphate + phosphate. It catalyses the reaction beta-D-fructose 1,6-bisphosphate = D-glyceraldehyde 3-phosphate + dihydroxyacetone phosphate. Its pathway is carbohydrate biosynthesis; gluconeogenesis. In terms of biological role, catalyzes two subsequent steps in gluconeogenesis: the aldol condensation of dihydroxyacetone phosphate (DHAP) and glyceraldehyde-3-phosphate (GA3P) to fructose-1,6-bisphosphate (FBP), and the dephosphorylation of FBP to fructose-6-phosphate (F6P). This is Fructose-1,6-bisphosphate aldolase/phosphatase from Cenarchaeum symbiosum (strain A).